Reading from the N-terminus, the 501-residue chain is L-lysine transport protein (501 aa).

The next 13 membrane-spanning stretches (helical) occupy residues 25–41 (LIAL…IFSI), 52–76 (GAML…HVLA), 92–113 (VGLG…SVIA), 138–155 (FVSA…FGVV), 174–191 (ILPL…GFSW), 214–232 (GIMV…ASVY), 247–269 (VIGF…GVLT), 292–316 (WGAA…QMLC), 340–362 (GAAW…IFFL), 377–393 (LYLV…VMLA), 424–440 (LIVG…LFYA), 447–463 (LFGA…YVWT), and 477–495 (IGVV…IGLV).

The protein belongs to the amino acid-polyamine-organocation (APC) superfamily. Basic amino acid/polyamine antiporter (APA) (TC 2.A.3.2) family.

The protein resides in the cell membrane. Its function is as follows. Permease that is involved in the transport across the membrane of lysine. This Corynebacterium glutamicum (strain ATCC 13032 / DSM 20300 / JCM 1318 / BCRC 11384 / CCUG 27702 / LMG 3730 / NBRC 12168 / NCIMB 10025 / NRRL B-2784 / 534) protein is L-lysine transport protein (lysI).